Here is a 234-residue protein sequence, read N- to C-terminus: uncharacterized protein (234 aa).

4 helical membrane-spanning segments follow: residues 28 to 48, 67 to 87, 123 to 143, and 154 to 174; these read IVII…SIIS, FQIF…FDPI, GGVD…SGTI, and LYCI…GLLY.

Belongs to the complex I subunit 2 family.

The protein localises to the mitochondrion membrane. This is an uncharacterized protein from Neurospora crassa (strain ATCC 24698 / 74-OR23-1A / CBS 708.71 / DSM 1257 / FGSC 987).